The sequence spans 263 residues: 4-hydroxy-tetrahydrodipicolinate reductase (263 aa).

NAD(+) contacts are provided by residues 7-12 (GFKGRM), 96-98 (GTT), and 122-125 (APNF). His-152 serves as the catalytic Proton donor/acceptor. His-153 contributes to the (S)-2,3,4,5-tetrahydrodipicolinate binding site. The Proton donor role is filled by Lys-156. Residue 162-163 (GT) coordinates (S)-2,3,4,5-tetrahydrodipicolinate.

This sequence belongs to the DapB family.

The protein localises to the cytoplasm. It carries out the reaction (S)-2,3,4,5-tetrahydrodipicolinate + NAD(+) + H2O = (2S,4S)-4-hydroxy-2,3,4,5-tetrahydrodipicolinate + NADH + H(+). It catalyses the reaction (S)-2,3,4,5-tetrahydrodipicolinate + NADP(+) + H2O = (2S,4S)-4-hydroxy-2,3,4,5-tetrahydrodipicolinate + NADPH + H(+). Its pathway is amino-acid biosynthesis; L-lysine biosynthesis via DAP pathway; (S)-tetrahydrodipicolinate from L-aspartate: step 4/4. Catalyzes the conversion of 4-hydroxy-tetrahydrodipicolinate (HTPA) to tetrahydrodipicolinate. In Listeria monocytogenes serotype 4b (strain F2365), this protein is 4-hydroxy-tetrahydrodipicolinate reductase.